A 1019-amino-acid chain; its full sequence is MLQGTCSVLLLWGILGAIQAQQQEVISPDTTERNNNCPEKTDCPIHVYFVLDTSESVTMQSPTDILLFHMKQFVPQFISQLQNEFYLDQVALSWRYGGLHFSDQVEVFSPPGSDRASFIKNLQGISSFRRGTFTDCALANMTEQIRQDRSKGTVHFAVVITDGHVTGSPCGGIKLQAERAREEGIRLFAVAPNQNLKEQGLRDIASTPHELYRNDYATMLPDSTEIDQDTINRIIKVMKHEAYGECYKVSCLEIPGPSGPKGYRGQKGAKGNMGEPGEPGQKGRQGDPGIEGPIGFPGPKGVPGFKGEKGEFGADGRKGAPGLAGKNGTDGQKGKLGRIGPPGCKGDPGNRGPDGYPGEAGSPGERGDQGGKGDPGRPGRRGPPGEIGAKGSKGYQGNSGAPGSPGVKGAKGGPGPRGPKGEPGRRGDPGTKGSPGSDGPKGEKGDPGPEGPRGLAGEVGNKGAKGDRGLPGPRGPQGALGEPGKQGSRGDPGDAGPRGDSGQPGPKGDPGRPGFSYPGPRGAPGEKGEPGPRGPEGGRGDFGLKGEPGRKGEKGEPADPGPPGEPGPRGPRGVPGPEGEPGPPGDPGLTECDVMTYVRETCGCCDCEKRCGALDVVFVIDSSESIGYTNFTLEKNFVINVVNRLGAIAKDPKSETGTRVGVVQYSHEGTFEAIQLDDERIDSLSSFKEAVKNLEWIAGGTWTPSALKFAYDRLIKESRRQKTRVFAVVITDGRHDPRDDDLNLRALCDRDVTVTAIGIGDMFHEKHESENLYSIACDKPQQVRNMTLFSDLVAEKFIDDMEDVLCPDPQIVCPDLPCQTELSVAQCTQRPVDIVFLLDGSERLGEQNFHKARRFVEQVARRLTLARRDDDPLNARVALLQFGGPGEQQVAFPLSHNLTAIHEALETTQYLNSFSHVGAGVVHAINAIVRSPRGGARRHAELSFVFLTDGVTGNDSLHESAHSMRKQNVVPTVLALGSDVDMDVLTTLSLGDRAAVFHEKDYDSLAQPGFFDRFIRWIC.

The signal sequence occupies residues 1 to 20 (MLQGTCSVLLLWGILGAIQA). Residues 21 to 256 (QQQEVISPDT…YKVSCLEIPG (236 aa)) form a nonhelical region region. The 189-residue stretch at 46-234 (HVYFVLDTSE…EIDQDTINRI (189 aa)) folds into the VWFA 1 domain. The N-linked (GlcNAc...) asparagine glycan is linked to Asn140. The disordered stretch occupies residues 257–588 (PSGPKGYRGQ…GEPGPPGDPG (332 aa)). Residues 257-590 (PSGPKGYRGQ…PGPPGDPGLT (334 aa)) form a triple-helical region region. Over residues 287–305 (DPGIEGPIGFPGPKGVPGF) the composition is skewed to low complexity. The span at 306–318 (KGEKGEFGADGRK) shows a compositional bias: basic and acidic residues. A glycan (N-linked (GlcNAc...) asparagine) is linked at Asn327. 2 stretches are compositionally biased toward basic and acidic residues: residues 365-377 (ERGD…DPGR) and 419-429 (PKGEPGRRGDP). Short sequence motifs (cell attachment site) lie at residues 366 to 368 (RGD), 426 to 428 (RGD), 489 to 491 (RGD), 498 to 500 (RGD), and 539 to 541 (RGD). Basic and acidic residues predominate over residues 524–557 (PGEKGEPGPRGPEGGRGDFGLKGEPGRKGEKGEP). Positions 559–569 (DPGPPGEPGPR) are enriched in pro residues. A nonhelical region region spans residues 591–1019 (ECDVMTYVRE…FFDRFIRWIC (429 aa)). VWFA domains follow at residues 615–805 (DVVF…EDVL) and 833–1014 (DIVF…FDRF). Residue Asn630 is glycosylated (N-linked (GlcNAc...) asparagine). Position 701 is a phosphothreonine (Thr701). Ser705 is subject to Phosphoserine. N-linked (GlcNAc...) asparagine glycans are attached at residues Asn785, Asn897, and Asn954.

This sequence belongs to the type VI collagen family. In terms of assembly, trimers composed of three different chains: alpha-1(VI), alpha-2(VI), and alpha-3(VI) or alpha-5(VI) or alpha-6(VI). Interacts with CSPG4. Post-translationally, prolines at the third position of the tripeptide repeating unit (G-X-Y) are hydroxylated in some or all of the chains.

Its subcellular location is the secreted. It is found in the extracellular space. It localises to the extracellular matrix. The protein localises to the membrane. Its function is as follows. Collagen VI acts as a cell-binding protein. This chain is Collagen alpha-2(VI) chain (COL6A2), found in Homo sapiens (Human).